A 169-amino-acid polypeptide reads, in one-letter code: Der GTPase-activating protein YihI (169 aa).

Disordered regions lie at residues 1-98 (MKPS…PQAE) and 144-169 (GLSY…LRGN). Residues 10–19 (SKGHAKARRK) are compositionally biased toward basic residues. The span at 20–30 (TREELDQEARD) shows a compositional bias: basic and acidic residues. Basic residues predominate over residues 31-40 (RKRLKKRRGH). Residues 49–58 (GNTTSGSKGQ) show a composition bias toward polar residues. The segment covering 147-159 (YDDDEEEEEDEKQ) has biased composition (acidic residues). Basic and acidic residues predominate over residues 160-169 (EDMMRLLRGN).

It belongs to the YihI family. In terms of assembly, interacts with Der.

Functionally, a GTPase-activating protein (GAP) that modifies Der/EngA GTPase function. May play a role in ribosome biogenesis. The protein is Der GTPase-activating protein YihI of Escherichia coli O6:K15:H31 (strain 536 / UPEC).